Reading from the N-terminus, the 159-residue chain is V-type proton ATPase 16 kDa proteolipid subunit c (159 aa).

At 1 to 11 (MSEEGSPMYSP) the chain is on the lumenal side. A helical membrane pass occupies residues 12 to 32 (FFGVMGAASAMVFSALGAAYG). The Cytoplasmic segment spans residues 33 to 54 (TAKSGVGISAMSVMRPELIMKC). A helical transmembrane segment spans residues 55 to 75 (IIPVVMAGIIAIYGLVVAVLI). Topologically, residues 76-93 (AGKLDEAPTYTLYQGFVH) are lumenal. The chain crosses the membrane as a helical span at residues 94-114 (MGAGLSVGLSGLAAGFAIGIV). The Cytoplasmic portion of the chain corresponds to 115 to 132 (GDAGVRGTAQQPRLYVGM). A helical membrane pass occupies residues 133-153 (ILILIFAEVLGLYGLIVAIFL). Residues 154 to 159 (YTKTSS) lie on the Lumenal side of the membrane.

It belongs to the V-ATPase proteolipid subunit family. In terms of assembly, V-ATPase is a heteromultimeric enzyme made up of two complexes: the ATP-hydrolytic V1 complex and the proton translocation V0 complex. The V1 complex consists of three catalytic AB heterodimers that form a heterohexamer, three peripheral stalks each consisting of EG heterodimers, one central rotor including subunits D and F, and the regulatory subunits C and H. The proton translocation complex V0 consists of the proton transport subunit a, a ring of proteolipid subunits c9c'', rotary subunit d, subunits e and f, and two accessory subunits.

The protein resides in the vacuole membrane. Functionally, proton-conducting pore forming subunit of the V0 complex of vacuolar(H+)-ATPase (V-ATPase), a multisubunit enzyme composed of a peripheral complex (V1) that hydrolyzes ATP and a membrane integral complex (V0) that translocates protons. V-ATPase is responsible for acidifying and maintaining the pH of intracellular compartments and in some cell types, is targeted to the plasma membrane, where it is responsible for acidifying the extracellular environment. The polypeptide is V-type proton ATPase 16 kDa proteolipid subunit c (Nephrops norvegicus (Norway lobster)).